The chain runs to 378 residues: N-acetyllactosaminide beta-1,3-N-acetylglucosaminyltransferase 4 (378 aa).

The Cytoplasmic segment spans residues 1 to 28 (MLPPQPSAAHQGRGGRSGLLPKGPAMLC). Residues 29–49 (RLCWLVSYSLAVLLLGCLLFL) traverse the membrane as a helical; Signal-anchor for type II membrane protein segment. Topologically, residues 50–378 (RKAAKPAGDP…KCAAGPIPQR (329 aa)) are lumenal. The tract at residues 59–81 (PTAHQPFWAPPTPRHSRCPPNHT) is disordered. Residue Asn-192 is glycosylated (N-linked (GlcNAc...) asparagine).

It belongs to the glycosyltransferase 31 family. Mainly expressed in brain tissues such as whole brain, hippocampus, amygdala, cerebellum and caudate nucleus. Also expressed in colon, esophagus and kidney.

It is found in the golgi apparatus membrane. It catalyses the reaction a beta-D-galactosyl-(1-&gt;4)-N-acetyl-beta-D-glucosaminyl derivative + UDP-N-acetyl-alpha-D-glucosamine = an N-acetyl-beta-D-glucosaminyl-(1-&gt;3)-beta-D-galactosyl-(1-&gt;4)-N-acetyl-beta-D-glucosaminyl derivative + UDP + H(+). The protein operates within protein modification; protein glycosylation. Its function is as follows. Beta-1,3-N-acetylglucosaminyltransferase involved in the synthesis of poly-N-acetyllactosamine. Has activity for type 2 oligosaccharides. This chain is N-acetyllactosaminide beta-1,3-N-acetylglucosaminyltransferase 4 (B3GNT4), found in Homo sapiens (Human).